Consider the following 171-residue polypeptide: Glutathione peroxidase-like peroxiredoxin GPX3 (171 aa).

Catalysis depends on cysteine 43, which acts as the Cysteine sulfenic acid (-SOH) intermediate. Cysteine 43 and cysteine 89 form a disulfide bridge.

Belongs to the glutathione peroxidase family. As to quaternary structure, interacts with CAP1 and probably YBP1.

The catalysed reaction is a hydroperoxide + [thioredoxin]-dithiol = an alcohol + [thioredoxin]-disulfide + H2O. Involved in oxidative stress response and redox homeostasis. Functions as a sensor and transducer of hydroperoxide stress. In response to hydroperoxide stress it oxidizes (activates) the transcription activator CAP1, which is involved in transcription activation of genes of the oxidative stress response pathway. May also play a direct role in hydroperoxide scavenging. The enzyme is not required for the glutaredoxin-mediated antioxidant function. In the presence of peroxides, GPX3 is directly oxidized at Cys-43 to form a cysteine sulfenic acid (-SOH). Cys-43-SOH then forms either an intramolecular disulfide bond (Cys-43 with Cys-89) or a transient, intermolecular disulfide bond with 'Cys-446' of CAP1, which is further resolved into a CAP1 intramolecular disulfide bond ('Cys-303' with 'Cys-598'), which causes its nuclear accumulation and activation, and a reduced Cys-43 in GPX3. Required for C.albicans-mediated macrophage killing. The chain is Glutathione peroxidase-like peroxiredoxin GPX3 from Candida albicans (strain SC5314 / ATCC MYA-2876) (Yeast).